Consider the following 148-residue polypeptide: MFFAFAVLLIALATREAYGESQLNTKFILGSGNQVMFENINKEYNTHLKWDDDLAAKAMVEAVRPHYRLLWNTGDYFTIRNDKLFTKRYVGPLEEKVRLVLLNPFKKYADKLRQLPEGTTYGCNGFFDTDTMPNDNYLYVACVYNIPN.

Positions 1-19 (MFFAFAVLLIALATREAYG) are cleaved as a signal peptide.

It to T.colubriformis 30 kDa antigenic glycoprotein.

It localises to the secreted. This Haemonchus contortus (Barber pole worm) protein is 15 kDa excretory/secretory protein.